The chain runs to 245 residues: Ribonuclease PH (245 aa).

Residues R86 and 124–126 contribute to the phosphate site; that span reads GTR.

The protein belongs to the RNase PH family. Homohexameric ring arranged as a trimer of dimers.

The catalysed reaction is tRNA(n+1) + phosphate = tRNA(n) + a ribonucleoside 5'-diphosphate. Functionally, phosphorolytic 3'-5' exoribonuclease that plays an important role in tRNA 3'-end maturation. Removes nucleotide residues following the 3'-CCA terminus of tRNAs; can also add nucleotides to the ends of RNA molecules by using nucleoside diphosphates as substrates, but this may not be physiologically important. Probably plays a role in initiation of 16S rRNA degradation (leading to ribosome degradation) during starvation. This Bacillus cytotoxicus (strain DSM 22905 / CIP 110041 / 391-98 / NVH 391-98) protein is Ribonuclease PH.